The sequence spans 355 residues: Guanine nucleotide-binding protein subunit alpha-14 (355 aa).

One can recognise a G-alpha domain in the interval 34–355; sequence RELKLLLLGT…QLNLREFNLV (322 aa). A G1 motif region spans residues 37 to 50; sequence KLLLLGTGESGKST. Residues 42-49, 176-182, 201-205, 270-273, and Ala-327 contribute to the GTP site; these read GTGESGKS, LRVRVPT, DVGGQ, and NKKD. Positions 49 and 182 each coordinate Mg(2+). The interval 174 to 182 is G2 motif; that stretch reads DVLRVRVPT. The interval 197–206 is G3 motif; it reads FRMVDVGGQR. Residues 266-273 are G4 motif; the sequence is ILFLNKKD. The G5 motif stretch occupies residues 325–330; that stretch reads TCATDT.

The protein belongs to the G-alpha family. G(q) subfamily. G proteins are composed of 3 units; alpha, beta and gamma. The alpha chain contains the guanine nucleotide binding site.

Functionally, guanine nucleotide-binding proteins (G proteins) are involved as modulators or transducers in various transmembrane signaling systems. The chain is Guanine nucleotide-binding protein subunit alpha-14 (GNA14) from Bos taurus (Bovine).